Reading from the N-terminus, the 310-residue chain is Integrin-binding sialoprotein (310 aa).

The first 16 residues, 1-16 (MKTVLILLSILGMACA), serve as a signal peptide directing secretion. Residues Ser31, Ser62, Ser67, Ser75, Ser76, Ser98, and Ser106 each carry the phosphoserine modification. A disordered region spans residues 61–284 (QSSSDSSEEN…NGDPRGDNYR (224 aa)). The segment covering 62 to 74 (SSSDSSEENGNGD) has biased composition (low complexity). Acidic residues-rich tracts occupy residues 75–87 (SSEE…ETSN) and 96–108 (EDSD…ESEA). N-linked (GlcNAc...) asparagine glycosylation is present at Asn110. Position 144 is a phosphothreonine (Thr144). The span at 152-174 (DESDEEEEEEEEEENEAEVDDNE) shows a compositional bias: acidic residues. Ser154 is modified (phosphoserine). Residues 175-187 (QGINGTSSNSTEV) show a composition bias toward polar residues. N-linked (GlcNAc...) asparagine glycosylation is found at Asn178 and Asn183. A compositionally biased stretch (acidic residues) spans 198–208 (NGEEDGEEESV). Residues 209–227 (TEANTEGITVAGETTTSPN) show a composition bias toward polar residues. Ser273 is subject to Phosphoserine. The Integrin-binding motif signature appears at 279–281 (RGD). Residue Ser300 is modified to Phosphoserine. Sulfotyrosine occurs at positions 306 and 307.

As to quaternary structure, monomer. Interacts with integrins; the interaction promotes cell adhesion.

The protein localises to the secreted. In terms of biological role, binds tightly to hydroxyapatite. Appears to form an integral part of the mineralized matrix. Probably important to cell-matrix interaction. Promotes adhesion and migration of various cells via the alpha-V/beta-3 integrin receptor (ITGAV:ITGB3). In Bos taurus (Bovine), this protein is Integrin-binding sialoprotein (IBSP).